The following is a 39-amino-acid chain: Photosystem II reaction center protein L (39 aa).

A helical membrane pass occupies residues 18–38; it reads SLYLGLLFVFVTGVLMSSYFF.

It belongs to the PsbL family. In terms of assembly, PSII is composed of 1 copy each of membrane proteins PsbA, PsbB, PsbC, PsbD, PsbE, PsbF, PsbH, PsbI, PsbJ, PsbK, PsbL, PsbM, PsbT, PsbX, PsbY, PsbZ, Psb30/Ycf12, peripheral proteins PsbO, CyanoQ (PsbQ), PsbU, PsbV and a large number of cofactors. It forms dimeric complexes.

It localises to the cellular thylakoid membrane. Its function is as follows. One of the components of the core complex of photosystem II (PSII). PSII is a light-driven water:plastoquinone oxidoreductase that uses light energy to abstract electrons from H(2)O, generating O(2) and a proton gradient subsequently used for ATP formation. It consists of a core antenna complex that captures photons, and an electron transfer chain that converts photonic excitation into a charge separation. This subunit is found at the monomer-monomer interface and is required for correct PSII assembly and/or dimerization. This chain is Photosystem II reaction center protein L, found in Synechococcus sp. (strain CC9902).